An 880-amino-acid chain; its full sequence is Valine--tRNA ligase (880 aa).

The 'HIGH' region motif lies at 49-59 (PNVTGKLHLGH). Residues 525 to 529 (KMSKS) carry the 'KMSKS' region motif. K528 is an ATP binding site. Residues 809 to 880 (LEGLINIEEE…VKARLAELKR (72 aa)) adopt a coiled-coil conformation.

This sequence belongs to the class-I aminoacyl-tRNA synthetase family. ValS type 1 subfamily. Monomer.

It localises to the cytoplasm. The enzyme catalyses tRNA(Val) + L-valine + ATP = L-valyl-tRNA(Val) + AMP + diphosphate. Its function is as follows. Catalyzes the attachment of valine to tRNA(Val). As ValRS can inadvertently accommodate and process structurally similar amino acids such as threonine, to avoid such errors, it has a 'posttransfer' editing activity that hydrolyzes mischarged Thr-tRNA(Val) in a tRNA-dependent manner. In Geobacillus stearothermophilus (Bacillus stearothermophilus), this protein is Valine--tRNA ligase (valS).